The primary structure comprises 143 residues: Large ribosomal subunit protein uL11 (143 aa).

Belongs to the universal ribosomal protein uL11 family. Part of the ribosomal stalk of the 50S ribosomal subunit. Interacts with L10 and the large rRNA to form the base of the stalk. L10 forms an elongated spine to which L12 dimers bind in a sequential fashion forming a multimeric L10(L12)X complex. In terms of processing, one or more lysine residues are methylated.

Forms part of the ribosomal stalk which helps the ribosome interact with GTP-bound translation factors. The polypeptide is Large ribosomal subunit protein uL11 (Rhizobium etli (strain CIAT 652)).